We begin with the raw amino-acid sequence, 134 residues long: Ribosome-binding factor A (134 aa).

It belongs to the RbfA family. Monomer. Binds 30S ribosomal subunits, but not 50S ribosomal subunits or 70S ribosomes.

It is found in the cytoplasm. Its function is as follows. One of several proteins that assist in the late maturation steps of the functional core of the 30S ribosomal subunit. Associates with free 30S ribosomal subunits (but not with 30S subunits that are part of 70S ribosomes or polysomes). Required for efficient processing of 16S rRNA. May interact with the 5'-terminal helix region of 16S rRNA. The polypeptide is Ribosome-binding factor A (Baumannia cicadellinicola subsp. Homalodisca coagulata).